Consider the following 130-residue polypeptide: Nascent polypeptide-associated complex protein (130 aa).

Positions 8 to 75 constitute an NAC-A/B domain; the sequence is PKMMRQMQKM…AKNIKKDDIK (68 aa).

Belongs to the NAC-alpha family. As to quaternary structure, homodimer. Interacts with the ribosome. Binds ribosomal RNA.

Functionally, contacts the emerging nascent chain on the ribosome. This chain is Nascent polypeptide-associated complex protein, found in Methanococcus aeolicus (strain ATCC BAA-1280 / DSM 17508 / OCM 812 / Nankai-3).